Consider the following 419-residue polypeptide: UDP-N-acetylglucosamine 1-carboxyvinyltransferase 2 (419 aa).

A phosphoenolpyruvate-binding site is contributed by 24 to 25; that stretch reads KN. A UDP-N-acetyl-alpha-D-glucosamine-binding site is contributed by arginine 94. The Proton donor role is filled by cysteine 118. The residue at position 118 (cysteine 118) is a 2-(S-cysteinyl)pyruvic acid O-phosphothioketal. UDP-N-acetyl-alpha-D-glucosamine-binding positions include 123-127, aspartate 307, and isoleucine 329; that span reads RPIDQ.

The protein belongs to the EPSP synthase family. MurA subfamily.

The protein localises to the cytoplasm. It carries out the reaction phosphoenolpyruvate + UDP-N-acetyl-alpha-D-glucosamine = UDP-N-acetyl-3-O-(1-carboxyvinyl)-alpha-D-glucosamine + phosphate. Its pathway is cell wall biogenesis; peptidoglycan biosynthesis. Cell wall formation. Adds enolpyruvyl to UDP-N-acetylglucosamine. The protein is UDP-N-acetylglucosamine 1-carboxyvinyltransferase 2 of Staphylococcus aureus (strain MRSA252).